A 375-amino-acid polypeptide reads, in one-letter code: Anhydro-N-acetylmuramic acid kinase (375 aa).

12 to 19 (GTSMDGVD) contacts ATP.

This sequence belongs to the anhydro-N-acetylmuramic acid kinase family.

It catalyses the reaction 1,6-anhydro-N-acetyl-beta-muramate + ATP + H2O = N-acetyl-D-muramate 6-phosphate + ADP + H(+). Its pathway is amino-sugar metabolism; 1,6-anhydro-N-acetylmuramate degradation. The protein operates within cell wall biogenesis; peptidoglycan recycling. Functionally, catalyzes the specific phosphorylation of 1,6-anhydro-N-acetylmuramic acid (anhMurNAc) with the simultaneous cleavage of the 1,6-anhydro ring, generating MurNAc-6-P. Is required for the utilization of anhMurNAc either imported from the medium or derived from its own cell wall murein, and thus plays a role in cell wall recycling. This chain is Anhydro-N-acetylmuramic acid kinase, found in Photobacterium profundum (strain SS9).